A 219-amino-acid polypeptide reads, in one-letter code: MKVVVIDSGTGNLASARRGLEIAAGRAGLDAKVIASADPLDVRNADRIVLPGQGAFADCARGIAAIEGMRGAIEEGVAAGKPFLGICVGMQLMAERGLEHEGAPGFGWIKGEIAPISCPGLRLPQMGWNGLDFTSTGCVHPLLNGLQADDHAYFVHGYALRDGDQAQILATTEYGGPVVAMVASGNRAGTQFHVEKSQEVGLRILQNFMVWTPEGTSGS.

Positions 2–218 (KVVVIDSGTG…MVWTPEGTSG (217 aa)) constitute a Glutamine amidotransferase type-1 domain. The active-site Nucleophile is cysteine 87. Residues histidine 193 and glutamate 195 contribute to the active site.

In terms of assembly, heterodimer of HisH and HisF.

The protein resides in the cytoplasm. The enzyme catalyses 5-[(5-phospho-1-deoxy-D-ribulos-1-ylimino)methylamino]-1-(5-phospho-beta-D-ribosyl)imidazole-4-carboxamide + L-glutamine = D-erythro-1-(imidazol-4-yl)glycerol 3-phosphate + 5-amino-1-(5-phospho-beta-D-ribosyl)imidazole-4-carboxamide + L-glutamate + H(+). It catalyses the reaction L-glutamine + H2O = L-glutamate + NH4(+). It functions in the pathway amino-acid biosynthesis; L-histidine biosynthesis; L-histidine from 5-phospho-alpha-D-ribose 1-diphosphate: step 5/9. Its function is as follows. IGPS catalyzes the conversion of PRFAR and glutamine to IGP, AICAR and glutamate. The HisH subunit catalyzes the hydrolysis of glutamine to glutamate and ammonia as part of the synthesis of IGP and AICAR. The resulting ammonia molecule is channeled to the active site of HisF. In Granulibacter bethesdensis (strain ATCC BAA-1260 / CGDNIH1), this protein is Imidazole glycerol phosphate synthase subunit HisH.